The sequence spans 1413 residues: DNA-directed RNA polymerase subunit beta' (1413 aa).

Cys-70, Cys-72, Cys-85, and Cys-88 together coordinate Zn(2+). The Mg(2+) site is built by Asp-460, Asp-462, and Asp-464. Zn(2+) is bound by residues Cys-814, Cys-888, Cys-895, and Cys-898.

This sequence belongs to the RNA polymerase beta' chain family. The RNAP catalytic core consists of 2 alpha, 1 beta, 1 beta' and 1 omega subunit. When a sigma factor is associated with the core the holoenzyme is formed, which can initiate transcription. The cofactor is Mg(2+). Zn(2+) serves as cofactor.

The enzyme catalyses RNA(n) + a ribonucleoside 5'-triphosphate = RNA(n+1) + diphosphate. Functionally, DNA-dependent RNA polymerase catalyzes the transcription of DNA into RNA using the four ribonucleoside triphosphates as substrates. In Bordetella avium (strain 197N), this protein is DNA-directed RNA polymerase subunit beta'.